The following is a 329-amino-acid chain: Cytosolic arginine sensor for mTORC1 subunit 2 (329 aa).

ACT domains follow at residues 72–140 and 262–322; these read ADAT…HTLS and ELWK…HALK.

Belongs to the GATS family. In terms of assembly, forms homodimers and heterodimers with CASTOR1. Interacts with the GATOR2 complex which is composed of MIOS, SEC13, SEH1L, WDR24 and WDR59; the interaction is not regulated by arginine.

It is found in the cytoplasm. The protein resides in the cytosol. Functionally, functions as a negative regulator of the TORC1 signaling pathway through the GATOR complex. As part of homodimers or heterodimers with CASTOR1, directly binds and inhibits the GATOR subcomplex GATOR2 and thereby mTORC1. Does not directly bind arginine, but binding of arginine to CASTOR1 disrupts the interaction of CASTOR2-containing heterodimers with GATOR2 which can in turn activate mTORC1 and the TORC1 signaling pathway. The sequence is that of Cytosolic arginine sensor for mTORC1 subunit 2 from Mus musculus (Mouse).